Here is a 388-residue protein sequence, read N- to C-terminus: S-adenosylmethionine synthase (388 aa).

His17 provides a ligand contact to ATP. Asp19 contributes to the Mg(2+) binding site. K(+) is bound at residue Glu45. Glu58 and Gln101 together coordinate L-methionine. Positions 101 to 111 are flexible loop; sequence QSPDIGQGVDT. Residues 160 to 162, 226 to 227, Asp235, 241 to 242, Ala258, and Lys262 each bind ATP; these read DGK, RF, and RK. Asp235 is a binding site for L-methionine. Lys266 is an L-methionine binding site.

Belongs to the AdoMet synthase family. As to quaternary structure, homotetramer; dimer of dimers. Mg(2+) is required as a cofactor. K(+) serves as cofactor.

The protein localises to the cytoplasm. The catalysed reaction is L-methionine + ATP + H2O = S-adenosyl-L-methionine + phosphate + diphosphate. It participates in amino-acid biosynthesis; S-adenosyl-L-methionine biosynthesis; S-adenosyl-L-methionine from L-methionine: step 1/1. Its function is as follows. Catalyzes the formation of S-adenosylmethionine (AdoMet) from methionine and ATP. The overall synthetic reaction is composed of two sequential steps, AdoMet formation and the subsequent tripolyphosphate hydrolysis which occurs prior to release of AdoMet from the enzyme. This Anaeromyxobacter sp. (strain K) protein is S-adenosylmethionine synthase.